The following is a 487-amino-acid chain: Zinc finger and BTB domain-containing protein 32 (487 aa).

Residues 29–87 (CDTLITVGGQEFPAHSLVLAGVSQQLGRRGQWALGEGISPSTFAQLLNFVYGESVELQP) form the BTB domain. Over residues 113–166 (RGDRAKKPDPGLKKHQEEPEKPSRNAERELGDPGEKQKPEQVSRTGGREQEMLH) the composition is skewed to basic and acidic residues. 2 disordered regions span residues 113–208 (RGDR…ADGK) and 308–371 (QNQL…ARSR). Residues 308–320 (QNQLASSSPTPGS) show a composition bias toward polar residues. Residues 357-369 (PPRPHPPPAPPAR) are compositionally biased toward pro residues. C2H2-type zinc fingers lie at residues 373-395 (YACSVCGKRFSLKHQMETHYRVH), 401-423 (FSCSLCPQRSRDFSAMTKHLRTH), and 428-450 (YRXXLCGAGCPSLASMQAHMRGH). The tract at residues 468-487 (SSSRPSRPSTSPCCPSSSTT) is disordered.

Belongs to the krueppel C2H2-type zinc-finger protein family. In terms of assembly, homodimer (via PTB domain). Interacts with the N-terminal of FANCC. Interacts with ZBTB16. Interacts with GATA3.

It localises to the nucleus. DNA-binding protein that binds to the to a 5'-TGTACAGTGT-3' core sequence. May function as a transcriptional transactivator and transcriptional repressor. Probably exerts its repressor effect by preventing GATA3 from binding to DNA. May play a role in regulating the differentiation and activation of helper T-cells. This is Zinc finger and BTB domain-containing protein 32 (ZBTB32) from Pan troglodytes (Chimpanzee).